Consider the following 196-residue polypeptide: uncharacterized protein (196 aa).

Residues 1–21 (MNGKQCFCFFLFHLFYTGLFA) form the signal peptide. Residue Cys22 is the site of N-palmitoyl cysteine attachment. The S-diacylglycerol cysteine moiety is linked to residue Cys22.

Its subcellular location is the cell membrane. This is an uncharacterized protein from Treponema pallidum (strain Nichols).